Consider the following 172-residue polypeptide: MERVIQGNDAREQANGERWDGGSGGTTSGFKLPDESPSWTEWRIHNDETDSNKDNPLGFKESWGFGKVVFKRYLRYDRTETSLHRVLGSWTGDSVNYAASRFLGVNQIGCTYSIRFRGVSVTISGGSRTLQHICEMAIRSKQELLQLAPVEVESNVSRGRPEGAEAFKEESE.

The span at M1–D20 shows a compositional bias: basic and acidic residues. Residues M1–P37 are disordered.

This sequence belongs to the tombusvirus protein p19 family. As to quaternary structure, homodimer.

Viral suppressor of RNA silencing which binds specifically to silencing RNAs (siRNAs). Acts as a molecular caliper to specifically select siRNAs based on the length of the duplex region of the RNA. The protein is RNA silencing suppressor p19 of Cynara cardunculus var. scolymus (Globe artichoke).